Reading from the N-terminus, the 1150-residue chain is Pesticidal crystal protein Cry9Ea (1150 aa).

This sequence belongs to the delta endotoxin family.

Promotes colloidosmotic lysis by binding to the midgut epithelial cells of insects. This Bacillus thuringiensis subsp. aizawai protein is Pesticidal crystal protein Cry9Ea (cry9Ea).